We begin with the raw amino-acid sequence, 353 residues long: Uroporphyrinogen decarboxylase (353 aa).

Substrate-binding positions include 26-30 (RQAGR), D76, Y153, T208, and H326.

This sequence belongs to the uroporphyrinogen decarboxylase family. In terms of assembly, homodimer.

It is found in the cytoplasm. The enzyme catalyses uroporphyrinogen III + 4 H(+) = coproporphyrinogen III + 4 CO2. The protein operates within porphyrin-containing compound metabolism; protoporphyrin-IX biosynthesis; coproporphyrinogen-III from 5-aminolevulinate: step 4/4. Catalyzes the decarboxylation of four acetate groups of uroporphyrinogen-III to yield coproporphyrinogen-III. The chain is Uroporphyrinogen decarboxylase from Chromohalobacter salexigens (strain ATCC BAA-138 / DSM 3043 / CIP 106854 / NCIMB 13768 / 1H11).